The primary structure comprises 254 residues: Probable septum site-determining protein MinC (254 aa).

The protein belongs to the MinC family. As to quaternary structure, interacts with MinD and FtsZ.

Its function is as follows. Cell division inhibitor that blocks the formation of polar Z ring septums. Rapidly oscillates between the poles of the cell to destabilize FtsZ filaments that have formed before they mature into polar Z rings. Prevents FtsZ polymerization. In Burkholderia ambifaria (strain ATCC BAA-244 / DSM 16087 / CCUG 44356 / LMG 19182 / AMMD) (Burkholderia cepacia (strain AMMD)), this protein is Probable septum site-determining protein MinC.